The primary structure comprises 661 residues: Pseudouridylate synthase 7 homolog (661 aa).

Residue Met-1 is modified to N-acetylmethionine. The segment at 1–97 is disordered; that stretch reads MEMTEMTGVS…GLSEECEEEE (97 aa). Ser-10 bears the Phosphoserine mark. The segment covering 36–52 has biased composition (polar residues); the sequence is SECSLTKGQDGLQNDFL. Positions 77 to 97 are enriched in acidic residues; that stretch reads QLEDEEEEEEDGLSEECEEEE. A Phosphoserine modification is found at Ser-127. Asp-294 acts as the Nucleophile in catalysis. A TRUD domain is found at 370 to 580; the sequence is GFINYYGMQR…SGAYRKIIIR (211 aa). Thr-610 is modified (phosphothreonine).

It belongs to the pseudouridine synthase TruD family. In terms of assembly, interacts with SIRT1.

The protein resides in the nucleus. It catalyses the reaction a uridine in tRNA = a pseudouridine in tRNA. The catalysed reaction is uridine(13) in tRNA = pseudouridine(13) in tRNA. The enzyme catalyses a uridine in mRNA = a pseudouridine in mRNA. In terms of biological role, pseudouridylate synthase that catalyzes pseudouridylation of RNAs. Acts as a regulator of protein synthesis in embryonic stem cells by mediating pseudouridylation of RNA fragments derived from tRNAs (tRFs): pseudouridylated tRFs inhibit translation by targeting the translation initiation complex. Also catalyzes pseudouridylation of mRNAs: mediates pseudouridylation of mRNAs with the consensus sequence 5'-UGUAG-3'. Acts as a regulator of pre-mRNA splicing by mediating pseudouridylation of pre-mRNAs at locations associated with alternatively spliced regions. Pseudouridylation of pre-mRNAs near splice sites directly regulates mRNA splicing and mRNA 3'-end processing. In addition to mRNAs and tRNAs, binds other types of RNAs, such as snRNAs, Y RNAs and vault RNAs, suggesting that it can catalyze pseudouridylation of many RNA types. This chain is Pseudouridylate synthase 7 homolog, found in Homo sapiens (Human).